The primary structure comprises 158 residues: SsrA-binding protein (158 aa).

The protein belongs to the SmpB family.

Its subcellular location is the cytoplasm. Required for rescue of stalled ribosomes mediated by trans-translation. Binds to transfer-messenger RNA (tmRNA), required for stable association of tmRNA with ribosomes. tmRNA and SmpB together mimic tRNA shape, replacing the anticodon stem-loop with SmpB. tmRNA is encoded by the ssrA gene; the 2 termini fold to resemble tRNA(Ala) and it encodes a 'tag peptide', a short internal open reading frame. During trans-translation Ala-aminoacylated tmRNA acts like a tRNA, entering the A-site of stalled ribosomes, displacing the stalled mRNA. The ribosome then switches to translate the ORF on the tmRNA; the nascent peptide is terminated with the 'tag peptide' encoded by the tmRNA and targeted for degradation. The ribosome is freed to recommence translation, which seems to be the essential function of trans-translation. This is SsrA-binding protein from Caldicellulosiruptor bescii (strain ATCC BAA-1888 / DSM 6725 / KCTC 15123 / Z-1320) (Anaerocellum thermophilum).